The sequence spans 288 residues: MSQISAKDVKELRDTTGVGMMECKKALEETGGDMQKAVEYLRKKGAAMAAKRADREASEGVVCILMSDDQKTGVILELNCETDFVARGEVFTGFANELATLALSNNCESREDLLGIKLGEAYGNETVEEALKSMTGKVGEKLELKRMARLTAEAGVLESYIHPGSQLGALIAIDTDKPAEAKALAKDLAMQVAAAAPIEVSRDAVSTELVEKEKEIYRQQALAEGKKEEFVDKIVMGRLNKYYQEVVLTEQTFIKDQNTKVSGVLDDFMKKNQAQVKVKAFVRYQLGA.

The interval 82–85 is involved in Mg(2+) ion dislocation from EF-Tu; sequence TDFV.

Belongs to the EF-Ts family.

Its subcellular location is the cytoplasm. Associates with the EF-Tu.GDP complex and induces the exchange of GDP to GTP. It remains bound to the aminoacyl-tRNA.EF-Tu.GTP complex up to the GTP hydrolysis stage on the ribosome. This chain is Elongation factor Ts, found in Chlorobaculum tepidum (strain ATCC 49652 / DSM 12025 / NBRC 103806 / TLS) (Chlorobium tepidum).